We begin with the raw amino-acid sequence, 161 residues long: NADH-quinone oxidoreductase subunit C (161 aa).

It belongs to the complex I 30 kDa subunit family. In terms of assembly, NDH-1 is composed of 14 different subunits. Subunits NuoB, C, D, E, F, and G constitute the peripheral sector of the complex.

The protein localises to the cell inner membrane. The enzyme catalyses a quinone + NADH + 5 H(+)(in) = a quinol + NAD(+) + 4 H(+)(out). Functionally, NDH-1 shuttles electrons from NADH, via FMN and iron-sulfur (Fe-S) centers, to quinones in the respiratory chain. The immediate electron acceptor for the enzyme in this species is believed to be ubiquinone. Couples the redox reaction to proton translocation (for every two electrons transferred, four hydrogen ions are translocated across the cytoplasmic membrane), and thus conserves the redox energy in a proton gradient. The sequence is that of NADH-quinone oxidoreductase subunit C from Citrifermentans bemidjiense (strain ATCC BAA-1014 / DSM 16622 / JCM 12645 / Bem) (Geobacter bemidjiensis).